Reading from the N-terminus, the 426-residue chain is Histidine--tRNA ligase (426 aa).

It belongs to the class-II aminoacyl-tRNA synthetase family. In terms of assembly, homodimer.

Its subcellular location is the cytoplasm. It carries out the reaction tRNA(His) + L-histidine + ATP = L-histidyl-tRNA(His) + AMP + diphosphate + H(+). The polypeptide is Histidine--tRNA ligase (Prochlorococcus marinus (strain MIT 9312)).